Reading from the N-terminus, the 99-residue chain is Protein S100-Z (99 aa).

2 EF-hand domains span residues 13–48 (IRIF…FLSC) and 50–85 (KETQ…LTVA). Positions 20, 23, 28, 33, 63, 65, 67, 69, and 74 each coordinate Ca(2+).

The protein belongs to the S-100 family. In terms of assembly, homodimer. Interacts with S100P. In terms of tissue distribution, highest level of expression in spleen and leukocytes.

This Homo sapiens (Human) protein is Protein S100-Z.